A 420-amino-acid polypeptide reads, in one-letter code: Transcriptional adapter 2-beta (420 aa).

The ZZ-type zinc finger occupies 4-59 (LSKKYCVYCLADVTSLRLRCTECQDIELCTDCFSAGAEIGNHRRWHGYQLVDGGRF). 8 residues coordinate Zn(2+): C9, C12, C23, C26, C32, C35, H45, and H49. Residues 65-118 (EAEGGWTSREEQLLLDAIEQFGFGNWEDMAAHVGASRTPTEVMEHYVTMYIHGN) form the SANT domain. Residues 303-333 (EESAEYEAARHKREKRKENKNIANSKRGRED) form a disordered region.

It is found in the nucleus. Its function is as follows. Transcriptional coactivator. The chain is Transcriptional adapter 2-beta (tada2b) from Xenopus laevis (African clawed frog).